The following is a 289-amino-acid chain: MTRLSHQDLRRNFRQLLASDTCYHTASVFDPMSARIAADLGFEVGILGGSVASLQVLGAPDFALITLSEFAEQATRIGRVAQLPVIADADHGYGNALNVMRTIVELERAGVAALTIEDTLLPAQFGRKSTDLITVAEGVGKIRAALEARVDSEMAIIARTNAGILPNQEIISRTKQYQAAGADGICMVGIQDFDQLEQIAEHLTVPLMLVTYGNPALRDDKRLAELGVRVTIDGHGAYFAAIKATYDSLREQRQIFTQASDLSATELTHTYTQPEEYILWAKEYMSVKE.

Ser-50 contacts substrate. Asp-88 lines the Mg(2+) pocket. The substrate site is built by Arg-159 and His-235.

The protein belongs to the isocitrate lyase/PEP mutase superfamily. Oxaloacetate decarboxylase family. In terms of assembly, homotetramer; dimer of dimers. Requires Mg(2+) as cofactor.

The catalysed reaction is oxaloacetate + H(+) = pyruvate + CO2. In terms of biological role, catalyzes the decarboxylation of oxaloacetate into pyruvate. Seems to play a role in maintaining cellular concentrations of bicarbonate and pyruvate. The polypeptide is Oxaloacetate decarboxylase 1 (Pseudomonas fluorescens (strain Pf0-1)).